The chain runs to 428 residues: Peptidase B (428 aa).

Mn(2+)-binding residues include Lys195 and Asp200. Lys207 is a catalytic residue. Mn(2+) is bound by residues Asp218, Asp277, and Glu279. The active site involves Arg281.

The protein belongs to the peptidase M17 family. As to quaternary structure, homohexamer. It depends on Mn(2+) as a cofactor.

It is found in the cytoplasm. The enzyme catalyses Release of an N-terminal amino acid, Xaa, from a peptide or arylamide. Xaa is preferably Glu or Asp but may be other amino acids, including Leu, Met, His, Cys and Gln.. In terms of biological role, probably plays an important role in intracellular peptide degradation. This chain is Peptidase B, found in Cronobacter sakazakii (strain ATCC BAA-894) (Enterobacter sakazakii).